Here is a 73-residue protein sequence, read N- to C-terminus: Large ribosomal subunit protein bL27c (73 aa).

The protein belongs to the bacterial ribosomal protein bL27 family.

The protein localises to the plastid. It is found in the chloroplast. The polypeptide is Large ribosomal subunit protein bL27c (rpl27) (Haptolina hirta (Plankton alga)).